The chain runs to 407 residues: FMN-dependent alpha-hydroxy acid dehydrogenase PB1A11.03 (407 aa).

The region spanning 28-406 (QRPQITVDGR…DLNRDVLYKE (379 aa)) is the FMN hydroxy acid dehydrogenase domain. Tyr-54 provides a ligand contact to a 2-oxocarboxylate. 2 residues coordinate FMN: Ser-136 and Gln-158. Tyr-160 is an a 2-oxocarboxylate binding site. Thr-188 contributes to the FMN binding site. Arg-197 is a binding site for a 2-oxocarboxylate. Lys-277 is a binding site for FMN. Catalysis depends on His-301, which acts as the Proton acceptor. A 2-oxocarboxylate is bound at residue Arg-304. Residues 332–336 (DSGVR) and 355–356 (GR) each bind FMN.

Belongs to the FMN-dependent alpha-hydroxy acid dehydrogenase family. FMN is required as a cofactor.

The protein resides in the cytoplasm. It is found in the nucleus. The sequence is that of FMN-dependent alpha-hydroxy acid dehydrogenase PB1A11.03 from Schizosaccharomyces pombe (strain 972 / ATCC 24843) (Fission yeast).